The sequence spans 410 residues: G-protein coupled receptor family C group 5 member B (410 aa).

Residues 1-28 form the signal peptide; that stretch reads MFLVLERKMRTHQVFPLPLLLVIASVAS. Residues 29–56 are Extracellular-facing; it reads ENASTSRGCGLDLLPQYVSLCDLDAIWG. N-linked (GlcNAc...) asparagine glycosylation is present at N30. The chain crosses the membrane as a helical span at residues 57 to 77; the sequence is IVVEAVAGAGALITLLLMLIL. Topologically, residues 78–94 are cytoplasmic; that stretch reads LVRLPFIKDKERKRPVC. The chain crosses the membrane as a helical span at residues 95 to 115; it reads LHFLFLLGTLGLFGLTFAFII. Residues 116–126 are Extracellular-facing; sequence QMDETICSIRR. Residues 127–147 form a helical membrane-spanning segment; sequence FLWGVLFALCFSCLLSQAWRV. At 148-164 the chain is on the cytoplasmic side; sequence RRLVRQGTSPASWQLVS. A helical membrane pass occupies residues 165–185; the sequence is LALCLMLVQVIIATEWLVLTV. Topologically, residues 186–199 are extracellular; sequence LRDTKPACAYEPMD. The helical transmembrane segment at 200-220 threads the bilayer; sequence FVMALIYDMVLLAITLAQSLF. Topologically, residues 221–234 are cytoplasmic; it reads TLCGKFKRWKVNGA. The chain crosses the membrane as a helical span at residues 235–255; sequence FILVTTFLSALIWVVWMTMYL. Residues 256 to 271 lie on the Extracellular side of the membrane; it reads FGNSLIKQGDAWSDPT. Residues 272–292 form a helical membrane-spanning segment; the sequence is LAITLAASGWVFVIFHAIPEI. At 293–410 the chain is on the cytoplasmic side; the sequence is HYTLLPPLQE…PPSHTGRHHW (118 aa). S355 bears the Phosphoserine mark. Residues 356 to 381 form a disordered region; sequence LEQRSSSLGKKPSSLGNRPSAPFRSN. The segment covering 360 to 371 has biased composition (low complexity); it reads SSSLGKKPSSLG.

This sequence belongs to the G-protein coupled receptor 3 family.

It localises to the cell membrane. Its subcellular location is the cytoplasmic vesicle membrane. G-protein coupled receptor involved in the regulation of cell volume. The protein is G-protein coupled receptor family C group 5 member B (Gprc5b) of Mus musculus (Mouse).